Consider the following 96-residue polypeptide: Aspartyl/glutamyl-tRNA(Asn/Gln) amidotransferase subunit C (96 aa).

This sequence belongs to the GatC family. As to quaternary structure, heterotrimer of A, B and C subunits.

It catalyses the reaction L-glutamyl-tRNA(Gln) + L-glutamine + ATP + H2O = L-glutaminyl-tRNA(Gln) + L-glutamate + ADP + phosphate + H(+). The catalysed reaction is L-aspartyl-tRNA(Asn) + L-glutamine + ATP + H2O = L-asparaginyl-tRNA(Asn) + L-glutamate + ADP + phosphate + 2 H(+). Its function is as follows. Allows the formation of correctly charged Asn-tRNA(Asn) or Gln-tRNA(Gln) through the transamidation of misacylated Asp-tRNA(Asn) or Glu-tRNA(Gln) in organisms which lack either or both of asparaginyl-tRNA or glutaminyl-tRNA synthetases. The reaction takes place in the presence of glutamine and ATP through an activated phospho-Asp-tRNA(Asn) or phospho-Glu-tRNA(Gln). This Sulfurovum sp. (strain NBC37-1) protein is Aspartyl/glutamyl-tRNA(Asn/Gln) amidotransferase subunit C.